The following is a 128-amino-acid chain: Thor profilin (128 aa).

It belongs to the Asgard profilin family.

It localises to the cytoplasm. The protein resides in the cytoskeleton. Functionally, has no profilin activity against rabbit actin. The polypeptide is Thor profilin (Thorarchaeota archaeon (strain AB_25)).